Reading from the N-terminus, the 611-residue chain is Muscarinic acetylcholine receptor gar-3 (611 aa).

Topologically, residues 1-67 are extracellular; that stretch reads MQSSSLGNAD…LLGEEGRMVM (67 aa). N-linked (GlcNAc...) asparagine glycans are attached at residues N28 and N33. Residues 68–88 form a helical membrane-spanning segment; the sequence is IVVIGAMFALVTSLGNLMVMV. The Cytoplasmic portion of the chain corresponds to 89 to 101; that stretch reads SFKIDKQLQTISN. A helical membrane pass occupies residues 102–122; the sequence is YFLFSLAVADIAIGVISIPMF. The Extracellular portion of the chain corresponds to 123 to 140; that stretch reads TYYTAIQKWDLGYTMCQF. C138 and C218 are joined by a disulfide. Residues 141–161 form a helical membrane-spanning segment; that stretch reads WLCIDYLMSNASVLNLLLISF. At 162-181 the chain is on the cytoplasmic side; the sequence is DRYFSVTRPLSYRPRRTTKK. A helical membrane pass occupies residues 182-202; sequence ALTMIACTYIISLILWPPWII. Over 203 to 227 the chain is Extracellular; it reads SWPYIEGKFTAEPGTCVVQFLQTNP. Residues 228-248 form a helical membrane-spanning segment; sequence YVTVGTAVAAFYLPVTIMCIL. At 249 to 525 the chain is on the cytoplasmic side; the sequence is YTRVYWETQK…RKQESKAAKT (277 aa). Disordered regions lie at residues 299–364, 377–432, 446–477, and 500–519; these read RRSM…SSEA, SHFA…NNNS, SRPS…NSEI, and FSSQ…RKQE. Positions 307–317 are enriched in low complexity; that stretch reads SSTSIIKSSGS. Residues 503-519 are compositionally biased toward basic and acidic residues; that stretch reads QERKSEKEQRKNERKQE. Residues 526–546 traverse the membrane as a helical segment; sequence LSAILCAFIATWTPYNLIVCW. Residues 547 to 557 are Extracellular-facing; sequence EAFFPNTVPNV. The helical transmembrane segment at 558–578 threads the bilayer; it reads LWTFSYFLCYINSTINPLCYA. Residues 579-611 lie on the Cytoplasmic side of the membrane; that stretch reads LCNARFRHTYMRILRCKFKAERPTMNQGYVRRN.

The protein belongs to the G-protein coupled receptor 1 family. Muscarinic acetylcholine receptor subfamily.

The protein resides in the cell membrane. Its function is as follows. The muscarinic acetylcholine receptor mediates various cellular responses, including inhibition of adenylate cyclase, breakdown of phosphoinositides and modulation of potassium channels through the action of G proteins. Primary transducing effect is Pi turnover. Enhances the release of the neurotransmitter acetlycholine in cholinergic motor neurons, which in turn positively feeds back to depolarize body wall muscles and allows for the maintenance of normal body posture and locomotion. The sequence is that of Muscarinic acetylcholine receptor gar-3 (gar-3) from Caenorhabditis elegans.